Here is a 403-residue protein sequence, read N- to C-terminus: Tyrosine--tRNA ligase (403 aa).

The 'HIGH' region signature appears at 42 to 51; the sequence is PTAPDLHLGH. The 'KMSKS' region signature appears at 226–230; sequence KMSKS. Lys-229 serves as a coordination point for ATP. The region spanning 336–396 is the S4 RNA-binding domain; it reads MPISAVLNKA…GKKAFGRVTL (61 aa).

Belongs to the class-I aminoacyl-tRNA synthetase family. TyrS type 2 subfamily. As to quaternary structure, homodimer.

The protein localises to the cytoplasm. The catalysed reaction is tRNA(Tyr) + L-tyrosine + ATP = L-tyrosyl-tRNA(Tyr) + AMP + diphosphate + H(+). Its function is as follows. Catalyzes the attachment of tyrosine to tRNA(Tyr) in a two-step reaction: tyrosine is first activated by ATP to form Tyr-AMP and then transferred to the acceptor end of tRNA(Tyr). In Pseudomonas syringae pv. syringae (strain B728a), this protein is Tyrosine--tRNA ligase.